We begin with the raw amino-acid sequence, 522 residues long: Biotin-dependent long chain acyl-coenzyme A carboxylase beta4 subunit (522 aa).

The 251-residue stretch at 11–261 (TAEKLAELRE…NCFDKPPVVN (251 aa)) folds into the CoA carboxyltransferase N-terminal domain. The region spanning 270-503 (GHDLELDSIV…RLLLRKSMHL (234 aa)) is the CoA carboxyltransferase C-terminal domain.

Belongs to the AccD/PCCB family. The biotin-dependent long-chain acyl-CoA carboxylase (LCC) complex is composed of AccA3, which contains the biotin carboxylase (BC) and biotin carboxyl carrier protein (BCCP) domains, and AccD4, which contains the carboxyl transferase (CT) domain. The complex also contains the beta5 subunit AccD5 and the epsilon subunit AccE5. The four subunits are essential for activity, but AccD5, together with AccE5, probably plays a structural role rather than a catalytic one.

Its function is as follows. Component of a biotin-dependent acyl-CoA carboxylase complex. This subunit transfers the CO2 from carboxybiotin to the CoA ester substrate. When associated with the alpha3 subunit AccA3, the beta5 subunit AccD5 and the epsilon subunit AccE5, forms the LCC complex, which is involved in the carboxylation of long chain acyl-CoA. The LCC complex can use C16-C24 substrates, the highest specific activity is obtained with carboxy-C20-CoA. Has low activity with acetyl-CoA and propionyl-CoA. The sequence is that of Biotin-dependent long chain acyl-coenzyme A carboxylase beta4 subunit from Mycobacterium tuberculosis (strain ATCC 25618 / H37Rv).